A 587-amino-acid chain; its full sequence is Zinc finger protein 496 (587 aa).

The tract at residues M1 to S40 is disordered. Residues A11–K20 are compositionally biased toward basic and acidic residues. K13 is covalently cross-linked (Glycyl lysine isopeptide (Lys-Gly) (interchain with G-Cter in SUMO2)). The SCAN box domain maps to R42–P124. Position 185 is a phosphoserine (S185). One can recognise a KRAB domain in the interval S221–V291. The disordered stretch occupies residues P260–E282. A Phosphoserine modification is found at S299. The disordered stretch occupies residues S358 to V399. The segment covering H389–V399 has biased composition (polar residues). A Glycyl lysine isopeptide (Lys-Gly) (interchain with G-Cter in SUMO2) cross-link involves residue K403. Residues Y406–R428 form a C2H2-type 1; degenerate zinc finger. 2 C2H2-type zinc fingers span residues H435–H457 and Y463–H485. The interval P488–L513 is disordered. Residue K496 forms a Glycyl lysine isopeptide (Lys-Gly) (interchain with G-Cter in SUMO2) linkage. C2H2-type zinc fingers lie at residues F522–H545 and F553–H575.

The protein belongs to the krueppel C2H2-type zinc-finger protein family. Interacts (via zinc-fingers) with JARID2. Interacts with NSD1.

The protein resides in the nucleus. In terms of biological role, DNA-binding transcription factor that can both act as an activator and a repressor. The polypeptide is Zinc finger protein 496 (ZNF496) (Homo sapiens (Human)).